Here is a 767-residue protein sequence, read N- to C-terminus: Protein transport protein Sec23B (767 aa).

An N-acetylalanine modification is found at Ala2. Residues Cys61, Cys66, Cys85, and Cys88 each contribute to the Zn(2+) site. At Lys564 the chain carries N6-acetyllysine. A Gelsolin-like repeat occupies 634–720 (PEPVLLDSSS…EHGGSQARFL (87 aa)).

Belongs to the SEC23/SEC24 family. SEC23 subfamily. In terms of assembly, COPII is composed of at least five proteins: the Sec23/24 complex, the Sec13/31 complex and Sar1. Interacts with SAR1A. In terms of tissue distribution, ubiquitously expressed.

The protein resides in the cytoplasmic vesicle. It localises to the COPII-coated vesicle membrane. The protein localises to the endoplasmic reticulum membrane. Its subcellular location is the cytoplasm. It is found in the cytosol. Functionally, component of the coat protein complex II (COPII) which promotes the formation of transport vesicles from the endoplasmic reticulum (ER). The coat has two main functions, the physical deformation of the endoplasmic reticulum membrane into vesicles and the selection of cargo molecules for their transport to the Golgi complex. This chain is Protein transport protein Sec23B, found in Homo sapiens (Human).